Reading from the N-terminus, the 449-residue chain is Na(+)-translocating NADH-quinone reductase subunit A (449 aa).

Belongs to the NqrA family. As to quaternary structure, composed of six subunits; NqrA, NqrB, NqrC, NqrD, NqrE and NqrF.

It carries out the reaction a ubiquinone + n Na(+)(in) + NADH + H(+) = a ubiquinol + n Na(+)(out) + NAD(+). In terms of biological role, NQR complex catalyzes the reduction of ubiquinone-1 to ubiquinol by two successive reactions, coupled with the transport of Na(+) ions from the cytoplasm to the periplasm. NqrA to NqrE are probably involved in the second step, the conversion of ubisemiquinone to ubiquinol. The polypeptide is Na(+)-translocating NADH-quinone reductase subunit A (Actinobacillus pleuropneumoniae serotype 5b (strain L20)).